We begin with the raw amino-acid sequence, 354 residues long: DNA polymerase IV (354 aa).

One can recognise a UmuC domain in the interval 3–188 (VIFVDFDYFF…LDIDEIPGIG (186 aa)). 2 residues coordinate Mg(2+): aspartate 7 and aspartate 105. Residue glutamate 106 is part of the active site.

The protein belongs to the DNA polymerase type-Y family. As to quaternary structure, monomer. Requires Mg(2+) as cofactor.

It is found in the cytoplasm. The catalysed reaction is DNA(n) + a 2'-deoxyribonucleoside 5'-triphosphate = DNA(n+1) + diphosphate. Functionally, poorly processive, error-prone DNA polymerase involved in untargeted mutagenesis. Copies undamaged DNA at stalled replication forks, which arise in vivo from mismatched or misaligned primer ends. These misaligned primers can be extended by PolIV. Exhibits no 3'-5' exonuclease (proofreading) activity. May be involved in translesional synthesis. This Sulfolobus acidocaldarius (strain ATCC 33909 / DSM 639 / JCM 8929 / NBRC 15157 / NCIMB 11770) protein is DNA polymerase IV.